Consider the following 236-residue polypeptide: UPF0257 lipoprotein YnfC (236 aa).

The N-terminal stretch at 1–16 is a signal peptide; that stretch reads MKYKLLPCLLAILLTG. The N-palmitoyl cysteine moiety is linked to residue Cys17. Cys17 carries the S-diacylglycerol cysteine lipid modification.

Belongs to the UPF0257 family.

The protein localises to the cell membrane. This is UPF0257 lipoprotein YnfC from Escherichia coli O157:H7.